We begin with the raw amino-acid sequence, 571 residues long: Isocitrate dehydrogenase kinase/phosphatase (571 aa).

Residues Ala-318–Met-324 and Lys-339 each bind ATP. Asp-374 is a catalytic residue.

Belongs to the AceK family.

The protein resides in the cytoplasm. The enzyme catalyses L-seryl-[isocitrate dehydrogenase] + ATP = O-phospho-L-seryl-[isocitrate dehydrogenase] + ADP + H(+). Bifunctional enzyme which can phosphorylate or dephosphorylate isocitrate dehydrogenase (IDH) on a specific serine residue. This is a regulatory mechanism which enables bacteria to bypass the Krebs cycle via the glyoxylate shunt in response to the source of carbon. When bacteria are grown on glucose, IDH is fully active and unphosphorylated, but when grown on acetate or ethanol, the activity of IDH declines drastically concomitant with its phosphorylation. The polypeptide is Isocitrate dehydrogenase kinase/phosphatase (Pseudomonas putida (strain ATCC 700007 / DSM 6899 / JCM 31910 / BCRC 17059 / LMG 24140 / F1)).